Here is a 930-residue protein sequence, read N- to C-terminus: Dual serine/threonine and tyrosine protein kinase (930 aa).

Positions 383–428 form a coiled coil; that stretch reads RKENELYESLMNIANRKQEEMKDMIIETLSNMKEELLEDAANMEFK. In terms of domain architecture, Protein kinase spans 653-907; sequence PKLGRELGRG…PLLGIVQPML (255 aa). ATP-binding positions include 659 to 667 and lysine 682; that span reads LGRGQYGVV. Aspartate 778 functions as the Proton acceptor in the catalytic mechanism.

The protein belongs to the protein kinase superfamily. Ser/Thr protein kinase family. As to expression, widely expressed with the highest expression in brain and ovary.

The protein resides in the cytoplasm. Its subcellular location is the cell membrane. It localises to the apical cell membrane. It is found in the basolateral cell membrane. The protein localises to the cell junction. The catalysed reaction is L-seryl-[protein] + ATP = O-phospho-L-seryl-[protein] + ADP + H(+). The enzyme catalyses L-threonyl-[protein] + ATP = O-phospho-L-threonyl-[protein] + ADP + H(+). It catalyses the reaction L-tyrosyl-[protein] + ATP = O-phospho-L-tyrosyl-[protein] + ADP + H(+). Its function is as follows. May act as a positive regulator of ERK phosphorylation downstream of fibroblast growth factor-receptor activation. May induce both caspase-dependent apoptosis and caspase-independent cell death. This Gallus gallus (Chicken) protein is Dual serine/threonine and tyrosine protein kinase (DSTYK).